Consider the following 317-residue polypeptide: Integrin-binding sialoprotein (317 aa).

An N-terminal signal peptide occupies residues 1–16 (MKTALILLSILGMACA). 6 positions are modified to phosphoserine: S31, S67, S74, S75, S94, and S100. The interval 58–254 (FPVQGSSDSS…RTTSPPFGKT (197 aa)) is disordered. The segment covering 66–102 (SSEENGDDSSEEEEEEEETSNEGENNEESNEDEDSEA) has biased composition (acidic residues). Residue N104 is glycosylated (N-linked (GlcNAc...) asparagine). O-linked (GalNAc...) threonine glycans are attached at residues T119 and T122. Residue S149 is modified to Phosphoserine. Positions 149–173 (SDEEEEEEEEGNENEESEAEVDENE) are enriched in acidic residues. Residues N177, N182, and N190 are each glycosylated (N-linked (GlcNAc...) asparagine). The span at 222 to 232 (KGTSKTTTSPN) shows a compositional bias: polar residues. O-linked (GalNAc...) threonine glycans are attached at residues T227, T228, T229, T238, and T239. S280 is modified (phosphoserine). The Integrin-binding motif signature appears at 286 to 288 (RGD). Sulfotyrosine is present on residues Y313 and Y314.

In terms of assembly, monomer. Interacts with integrins; the interaction promotes cell adhesion. In terms of processing, N-glycosylated; glycans consist of sialylated and core-fucosylated bi-, tri- and tetraantennary chains. O-glycosylated at eight sites; mucin-type glycans contain Gal, GlcNAc, GalNAc and terminal NeuAc. In terms of tissue distribution, expressed in bone (at protein level). Expressed in trophoblast cells of placenta (at protein level). Expressed in brain.

The protein localises to the secreted. Binds tightly to hydroxyapatite. Appears to form an integral part of the mineralized matrix. Probably important to cell-matrix interaction. Promotes adhesion and migration of various cells via the alpha-V/beta-3 integrin receptor (ITGAV:ITGB3). The polypeptide is Integrin-binding sialoprotein (IBSP) (Homo sapiens (Human)).